A 337-amino-acid polypeptide reads, in one-letter code: Eukaryotic translation initiation factor 3 subunit H (337 aa).

The MPN domain maps to 21–153 (VQCDGLAVMK…LKAYRLTPQA (133 aa)).

Belongs to the eIF-3 subunit H family. As to quaternary structure, component of the eukaryotic translation initiation factor 3 (eIF-3) complex. The eIF-3 complex interacts with pix. Interacts with mxt.

It localises to the cytoplasm. Component of the eukaryotic translation initiation factor 3 (eIF-3) complex, which is involved in protein synthesis of a specialized repertoire of mRNAs and, together with other initiation factors, stimulates binding of mRNA and methionyl-tRNAi to the 40S ribosome. The eIF-3 complex specifically targets and initiates translation of a subset of mRNAs involved in cell proliferation. In Drosophila pseudoobscura pseudoobscura (Fruit fly), this protein is Eukaryotic translation initiation factor 3 subunit H.